The sequence spans 359 residues: Phosphoribosylformylglycinamidine cyclo-ligase (359 aa).

Belongs to the AIR synthase family.

It is found in the cytoplasm. It carries out the reaction 2-formamido-N(1)-(5-O-phospho-beta-D-ribosyl)acetamidine + ATP = 5-amino-1-(5-phospho-beta-D-ribosyl)imidazole + ADP + phosphate + H(+). It functions in the pathway purine metabolism; IMP biosynthesis via de novo pathway; 5-amino-1-(5-phospho-D-ribosyl)imidazole from N(2)-formyl-N(1)-(5-phospho-D-ribosyl)glycinamide: step 2/2. The chain is Phosphoribosylformylglycinamidine cyclo-ligase from Brucella canis (strain ATCC 23365 / NCTC 10854 / RM-666).